Reading from the N-terminus, the 37-residue chain is Large ribosomal subunit protein bL36 (37 aa).

It belongs to the bacterial ribosomal protein bL36 family.

This Aquifex aeolicus (strain VF5) protein is Large ribosomal subunit protein bL36.